A 241-amino-acid polypeptide reads, in one-letter code: Acyl-protein thioesterase 1 (241 aa).

Active-site charge relay system residues include Ser122, Asp178, and His211.

This sequence belongs to the AB hydrolase superfamily. AB hydrolase 2 family.

It localises to the cytoplasm. The protein localises to the nucleus. The enzyme catalyses S-hexadecanoyl-L-cysteinyl-[protein] + H2O = L-cysteinyl-[protein] + hexadecanoate + H(+). Functionally, hydrolyzes fatty acids from S-acylated cysteine residues in proteins with a strong preference for palmitoylated G-alpha proteins over other acyl substrates. Mediates the deacylation of G-alpha proteins such as GPA1 in vivo, but has weak or no activity toward palmitoylated Ras proteins. Has weak lysophospholipase activity in vitro; however such activity may not exist in vivo. This is Acyl-protein thioesterase 1 from Aspergillus fumigatus (strain ATCC MYA-4609 / CBS 101355 / FGSC A1100 / Af293) (Neosartorya fumigata).